We begin with the raw amino-acid sequence, 580 residues long: Tricyclene synthase TPS4, chloroplastic (580 aa).

Residues 1–41 (MLLNSSFISLPSFFKSQELGRTNLLIHRNGSPLLCYATNTN) constitute a chloroplast transit peptide. (2E)-geranyl diphosphate contacts are provided by arginine 296, aspartate 334, aspartate 338, arginine 475, and asparagine 478. Mg(2+) is bound by residues aspartate 334 and aspartate 338. Positions 334–338 (DDIYD) match the DDXXD motif motif. 3 residues coordinate Mg(2+): asparagine 478, threonine 482, and glutamate 486.

Belongs to the terpene synthase family. Tpsb subfamily. The cofactor is Mg(2+). Mn(2+) serves as cofactor. In terms of tissue distribution, expressed in leaves.

Its subcellular location is the plastid. The protein localises to the chloroplast stroma. The enzyme catalyses (2E)-geranyl diphosphate = tricyclene + diphosphate. It carries out the reaction (2E)-geranyl diphosphate = (E)-beta-ocimene + diphosphate. It functions in the pathway secondary metabolite biosynthesis; terpenoid biosynthesis. Functionally, promotes the emission of terpenes volatile organic compounds (VOC) in response to damage mediated by arthropod herbivores (e.g. Spodoptera exigua), probably to attract natural enemies of the herbivores. In Medicago truncatula (Barrel medic), this protein is Tricyclene synthase TPS4, chloroplastic (TPS4).